Here is a 70-residue protein sequence, read N- to C-terminus: Conotoxin Im23.4 (70 aa).

A signal peptide spans 1 to 22 (MIMRMTLTLFVLVVMTAASASG). The propeptide occupies 23–30 (DALTEAKR). 3 disulfides stabilise this stretch: C34–C41, C45–C53, and C54–C69.

This sequence belongs to the conotoxin K superfamily. As to expression, expressed by the venom duct.

The protein resides in the secreted. Probable neurotoxin. The chain is Conotoxin Im23.4 from Conus imperialis (Imperial cone).